An 854-amino-acid polypeptide reads, in one-letter code: Probable inactive serine/threonine-protein kinase DDB_G0274821 (854 aa).

One can recognise a Protein kinase domain in the interval 1-266 (MPIKESFKRI…WPKLFIHPFF (266 aa)). N-linked (GlcNAc...) asparagine glycosylation is found at Asn-32 and Asn-106. A disordered region spans residues 116-135 (NNNNNNNNNNNNNNNNNNNN). Residues Asn-163, Asn-279, Asn-283, and Asn-290 are each glycosylated (N-linked (GlcNAc...) asparagine). The interval 289-331 (LNKSSSSSSSSSSSSSSSSSSSSSSSLSFQQQQQPNNISSPNL) is disordered. Residues 292-322 (SSSSSSSSSSSSSSSSSSSSSSSLSFQQQQQ) show a composition bias toward low complexity. N-linked (GlcNAc...) asparagine glycans are attached at residues Asn-325, Asn-347, and Asn-365. The interval 384 to 408 (IISPNRPSSPPLSSLSSCSSSSSSS) is disordered. N-linked (GlcNAc...) asparagine glycosylation is present at Asn-414. Residues 425–446 (NNNNNNNNNNNNNNNNNNNNNN) form a disordered region. N-linked (GlcNAc...) asparagine glycans are attached at residues Asn-520, Asn-541, and Asn-620. Residues 627 to 650 (SSPPPSSSSSSSSPSSPSSTSPSL) are disordered. Residues 633 to 650 (SSSSSSSPSSPSSTSPSL) are compositionally biased toward low complexity. Asn-757 is a glycosylation site (N-linked (GlcNAc...) asparagine). The chain crosses the membrane as a helical span at residues 770–792 (HWRVQISFLNILFILITINNNFI).

This sequence belongs to the protein kinase superfamily. Ser/Thr protein kinase family.

The protein localises to the membrane. The protein is Probable inactive serine/threonine-protein kinase DDB_G0274821 of Dictyostelium discoideum (Social amoeba).